The following is a 117-amino-acid chain: Large ribosomal subunit protein bL19 (117 aa).

This sequence belongs to the bacterial ribosomal protein bL19 family.

This protein is located at the 30S-50S ribosomal subunit interface and may play a role in the structure and function of the aminoacyl-tRNA binding site. This chain is Large ribosomal subunit protein bL19, found in Vesicomyosocius okutanii subsp. Calyptogena okutanii (strain HA).